A 569-amino-acid polypeptide reads, in one-letter code: Arginine--tRNA ligase (569 aa).

The 'HIGH' region signature appears at 123-133 (ANPNGPLHVGH).

The protein belongs to the class-I aminoacyl-tRNA synthetase family.

It localises to the cytoplasm. The catalysed reaction is tRNA(Arg) + L-arginine + ATP = L-arginyl-tRNA(Arg) + AMP + diphosphate. The sequence is that of Arginine--tRNA ligase from Methanosarcina barkeri (strain Fusaro / DSM 804).